A 166-amino-acid polypeptide reads, in one-letter code: Small ribosomal subunit protein uS3m (166 aa).

The N-terminal 25 residues, 1–25 (MLRSLQHVESHINQCRRISTTSTLL), are a transit peptide targeting the mitochondrion.

It belongs to the universal ribosomal protein uS3 family. In terms of assembly, component of the mitochondrial ribosome small subunit (28S) which comprises a 12S rRNA and about 30 distinct proteins.

It localises to the mitochondrion. The sequence is that of Small ribosomal subunit protein uS3m (mrps-24) from Caenorhabditis briggsae.